Consider the following 217-residue polypeptide: Large ribosomal subunit protein bL25 (217 aa).

It belongs to the bacterial ribosomal protein bL25 family. CTC subfamily. In terms of assembly, part of the 50S ribosomal subunit; part of the 5S rRNA/L5/L18/L25 subcomplex. Contacts the 5S rRNA. Binds to the 5S rRNA independently of L5 and L18.

Its function is as follows. This is one of the proteins that binds to the 5S RNA in the ribosome where it forms part of the central protuberance. This is Large ribosomal subunit protein bL25 from Methylobacterium sp. (strain 4-46).